Consider the following 378-residue polypeptide: Galanin receptor 2b (378 aa).

Topologically, residues 1–30 (MSDHEDLNKAMGHWNASESYQLNPASVIVS) are extracellular. A helical membrane pass occupies residues 31-51 (VVFSLIFLLGTIGNSLVLAVL). Residues 52–62 (LRSGQVGYNTT) are Cytoplasmic-facing. The chain crosses the membrane as a helical span at residues 63–83 (NLFILNLSVADFFFIIFCVPF). At 84–101 (QATIYSLEGWVFGSFMCK) the chain is on the extracellular side. Cysteine 100 and cysteine 177 are disulfide-bonded. Residues 102-123 (VVHFFINLTMYASSFTLAAVSV) form a helical membrane-spanning segment. The Cytoplasmic portion of the chain corresponds to 124-143 (DRYLAIRYPLRSRELRTPCN). The chain crosses the membrane as a helical span at residues 144–164 (AVVAMVVIWGLSLVFAGPYLS). Topologically, residues 165 to 187 (YYDLIDFENSNVCVPGWEEHNRK) are extracellular. A helical membrane pass occupies residues 188–208 (VLDTCTFVFGYVIPVLIVSLS). The Cytoplasmic portion of the chain corresponds to 209-238 (YTRTIKYLWTAVDPLDGMSESKRAKRKVTK). The helical transmembrane segment at 239–259 (MIIIVTVLFCICWLPYHVVIL) threads the bilayer. Residues 260–276 (CYLYGDFPFNQTTYAFR) lie on the Extracellular side of the membrane. Residues 277–297 (LLSHCMAYANSCLNPIVYALV) traverse the membrane as a helical segment. Residues 298–378 (SKHFRKGFKK…TITLPFQNQP (81 aa)) are Cytoplasmic-facing. Residues 339–362 (EVSQMNEENARQNESEMVNRPLAQ) are disordered.

It belongs to the G-protein coupled receptor 1 family. Expressed in neurons in the ventral area of the interpeduncular nucleus (IPN) where expression often overlaps with spx1.

It is found in the membrane. Its function is as follows. Receptor for the hormone galanin. Receptor for the hormones spexin-1 and spexin-2. The protein is Galanin receptor 2b of Danio rerio (Zebrafish).